The sequence spans 266 residues: Glutamate racemase (266 aa).

Residues 9–10 and 41–42 each bind substrate; these read DS and YG. The active-site Proton donor/acceptor is cysteine 73. 74-75 contributes to the substrate binding site; the sequence is NS. The Proton donor/acceptor role is filled by cysteine 183. Residue 184–185 coordinates substrate; the sequence is TH.

The protein belongs to the aspartate/glutamate racemases family.

It catalyses the reaction L-glutamate = D-glutamate. Its pathway is cell wall biogenesis; peptidoglycan biosynthesis. Its function is as follows. Provides the (R)-glutamate required for cell wall biosynthesis. The protein is Glutamate racemase of Shewanella loihica (strain ATCC BAA-1088 / PV-4).